The primary structure comprises 72 residues: Translation initiation factor IF-1 (72 aa).

Residues 1-72 (MAKSDVIEVD…DKGRITYRYK (72 aa)) enclose the S1-like domain.

This sequence belongs to the IF-1 family. As to quaternary structure, component of the 30S ribosomal translation pre-initiation complex which assembles on the 30S ribosome in the order IF-2 and IF-3, IF-1 and N-formylmethionyl-tRNA(fMet); mRNA recruitment can occur at any time during PIC assembly.

The protein localises to the cytoplasm. One of the essential components for the initiation of protein synthesis. Stabilizes the binding of IF-2 and IF-3 on the 30S subunit to which N-formylmethionyl-tRNA(fMet) subsequently binds. Helps modulate mRNA selection, yielding the 30S pre-initiation complex (PIC). Upon addition of the 50S ribosomal subunit IF-1, IF-2 and IF-3 are released leaving the mature 70S translation initiation complex. The sequence is that of Translation initiation factor IF-1 from Sulfurimonas denitrificans (strain ATCC 33889 / DSM 1251) (Thiomicrospira denitrificans (strain ATCC 33889 / DSM 1251)).